The chain runs to 865 residues: Centrosomal protein of 97 kDa (865 aa).

LRR repeat units follow at residues 37-58 (DIHT…EKCK), 59-80 (RLIQ…AKLT), 81-102 (LLRV…KELV), 103-124 (HLEW…NSCT), 125-146 (ALQH…SKLV), 147-168 (SLKT…PAYL), 171-192 (SLAI…SFLA), and 196-205 (ELEQLSIMNN). Positions 211-249 (TPSIPGFDYRPYIVSWCLNLRVLDGYVISQKESLKAEWL) constitute an LRRCT domain. The segment at 300–750 (HQRQLMNQSQ…RYGKESDLGD (451 aa)) is CCP110-binding. A phosphoserine mark is found at Ser308, Ser413, and Ser500. Residues 506 to 529 (ESTEQKQSDIKKPENTQPENKETI) form a disordered region. Residues 508 to 527 (TEQKQSDIKKPENTQPENKE) are compositionally biased toward basic and acidic residues. Phosphoserine is present on Ser530. Phosphothreonine is present on Thr542. An IQ domain is found at 558 to 587 (LNDAATKLQACWRGFYARNYNPQAKDVRYE). The interaction with MPHOSPH9 stretch occupies residues 587–865 (EIRLRRMQEH…FQLLHVGVTV (279 aa)). Residues 715 to 769 (QHSLDFEKSSTEGSESSIMGNSIDTVRYGKESDLGDVSEEHGEWNKESSNNEQDN) are disordered. A compositionally biased stretch (polar residues) spans 725–738 (TEGSESSIMGNSID). Residues 741 to 760 (RYGKESDLGDVSEEHGEWNK) show a composition bias toward basic and acidic residues. Ser763 bears the Phosphoserine mark.

Interacts with CALM1, CEP76, KIF24 and TALPID3. Interacts with CCP110. ENKD1 competes with CEP97 for binding to CCP110, destabilizing the interaction between CP110 and CEP97 which promotes the removal of CCP110 and CEP97 from the mother centriole and allows the initiation of ciliogenesis. Via its interaction with CCP110, may indirectly interact with HERC2 and NEURL4. Interacts with MPHOSPH9.

It is found in the cytoplasm. The protein localises to the cytoskeleton. It localises to the microtubule organizing center. The protein resides in the centrosome. Its subcellular location is the centriole. In terms of biological role, acts as a key negative regulator of ciliogenesis in collaboration with CCP110 by capping the mother centriole thereby preventing cilia formation. Required for recruitment of CCP110 to the centrosome. The chain is Centrosomal protein of 97 kDa (CEP97) from Homo sapiens (Human).